Here is a 260-residue protein sequence, read N- to C-terminus: Histidine-binding periplasmic protein (260 aa).

Positions 1–22 (MKKLVLSLSLVLAFSSATAAFA) are cleaved as a signal peptide. Cysteines 60 and 67 form a disulfide. L-histidine-binding residues include Ser-91, Ser-92, Ser-94, Arg-99, Thr-143, and Asp-183.

This sequence belongs to the bacterial solute-binding protein 3 family. The complex is composed of two ATP-binding proteins (HisP), two transmembrane proteins (HisM and HisQ) and a solute-binding protein (HisJ).

The protein localises to the periplasm. Part of the ABC transporter complex HisPMQJ involved in histidine transport. Binds histidine. Interacts with HisQMP and stimulates ATPase activity of HisP, which results in histidine translocation. This chain is Histidine-binding periplasmic protein (hisJ), found in Escherichia coli O157:H7.